We begin with the raw amino-acid sequence, 450 residues long: Equilibrative nucleotide transporter 1 (450 aa).

11 consecutive transmembrane segments (helical) span residues 63–83 (FAYI…NAFI), 101–121 (IFAV…VVFY), 133–153 (LGLL…LVYV), 168–188 (AAVA…IGVA), 196–216 (MQAV…LRIL), 234–254 (LYFA…NVAH), 300–320 (HGFG…GYIT), 334–354 (ILLI…TAVF), 361–381 (IAVG…GCLH), 394–414 (ILTC…MILA), and 430–450 (TVMF…FWVI).

Belongs to the SLC29A/ENT transporter (TC 2.A.57) family. In young seedlings, expressed in root elongation zone, root cortex, root-hair, at the transition to the shoot and cotyledons. Expressed in hydathodes of fully developed leaves and pollen.

It is found in the vacuole membrane. Nucleoside transporter involved in adenosine transport and required for nucleotide metabolism which influences growth and pollen germination. Has high affinity for adenosine when expressed in a heterologous system (yeast). The polypeptide is Equilibrative nucleotide transporter 1 (ENT1) (Arabidopsis thaliana (Mouse-ear cress)).